A 259-amino-acid chain; its full sequence is Phosphatidylglycerol--prolipoprotein diacylglyceryl transferase (259 aa).

The next 4 helical transmembrane spans lie at 16 to 36 (LAIS…WFYA), 55 to 75 (FITY…VLLY), 92 to 112 (EGGM…YLFC), and 117 to 137 (INFL…LFLG). An a 1,2-diacyl-sn-glycero-3-phospho-(1'-sn-glycerol)-binding site is contributed by arginine 138. Transmembrane regions (helical) follow at residues 172 to 192 (QLYE…YATF), 201 to 221 (GLNS…IEIF), and 228 to 248 (IGFI…MLLL).

It belongs to the Lgt family.

It localises to the cell inner membrane. The enzyme catalyses L-cysteinyl-[prolipoprotein] + a 1,2-diacyl-sn-glycero-3-phospho-(1'-sn-glycerol) = an S-1,2-diacyl-sn-glyceryl-L-cysteinyl-[prolipoprotein] + sn-glycerol 1-phosphate + H(+). It participates in protein modification; lipoprotein biosynthesis (diacylglyceryl transfer). Its function is as follows. Catalyzes the transfer of the diacylglyceryl group from phosphatidylglycerol to the sulfhydryl group of the N-terminal cysteine of a prolipoprotein, the first step in the formation of mature lipoproteins. This chain is Phosphatidylglycerol--prolipoprotein diacylglyceryl transferase, found in Rickettsia rickettsii (strain Iowa).